Reading from the N-terminus, the 622-residue chain is Threonine--tRNA ligase (622 aa).

The editing domain stretch occupies residues Met-1–Glu-141. A catalytic region spans residues Pro-199–Pro-498. Cys-291, His-343, and His-467 together coordinate Zn(2+).

This sequence belongs to the class-II aminoacyl-tRNA synthetase family. As to quaternary structure, homodimer. The cofactor is Zn(2+).

Its subcellular location is the cytoplasm. It carries out the reaction tRNA(Thr) + L-threonine + ATP = L-threonyl-tRNA(Thr) + AMP + diphosphate + H(+). In terms of biological role, catalyzes the attachment of threonine to tRNA(Thr) in a two-step reaction: L-threonine is first activated by ATP to form Thr-AMP and then transferred to the acceptor end of tRNA(Thr). Also edits incorrectly charged L-seryl-tRNA(Thr). The polypeptide is Threonine--tRNA ligase (Methanococcus maripaludis (strain C7 / ATCC BAA-1331)).